The sequence spans 479 residues: Serine protease HTRA1A (479 aa).

A signal peptide spans 1-18; that stretch reads MILVTLFCICALVTSLQA. The 85-residue stretch at 27 to 111 folds into the IGFBP N-terminal domain; it reads VIGGCPSHCD…RGKQGVCVCK (85 aa). 6 cysteine pairs are disulfide-bonded: Cys-31/Cys-56, Cys-35/Cys-58, Cys-40/Cys-59, Cys-47/Cys-62, Cys-70/Cys-87, and Cys-81/Cys-108. The 60-residue stretch at 96-155 folds into the Kazal-like domain; sequence SATVRRRGKQGVCVCKSSDPVCGSDGVSYRDICELKRVSNRAQSLQQPPVLFIQRGACGT. Positions 203–363 are serine protease; the sequence is GSGFVVSDDG…IPSDKIRQFL (161 aa). Catalysis depends on charge relay system residues His-219, Asp-249, and Ser-327. The PDZ domain occupies 364 to 466; that stretch reads AESYDRLARG…LRVVVRRGNE (103 aa).

It belongs to the peptidase S1C family. Forms homotrimers. In the presence of substrate, may form higher-order multimers in a PDZ-independent manner.

Its subcellular location is the secreted. The protein resides in the cytoplasm. The protein localises to the cytosol. In terms of biological role, serine protease with a variety of targets, including extracellular matrix proteins and proteoglycans. Through cleavage of proteoglycans, may release soluble FGF-glycosaminoglycan complexes that promote the range and intensity of FGF signals in the extracellular space. Regulates the availability of insulin-like growth factors (IGFs) by cleaving IGF-binding proteins. Inhibits signaling mediated by TGF-beta family members. Consequently, may regulate many physiological processes. Intracellularly, degrades TSC2, leading to the activation of TSC2 downstream targets. In Danio rerio (Zebrafish), this protein is Serine protease HTRA1A (htra1a).